The primary structure comprises 803 residues: H(+)/Cl(-) exchange transporter 7 (803 aa).

The interval 1–46 (MANVSKKVSWSGRDRDDEEGAPLLRRTGQPDEETPLLNGAGPGARQ) is disordered. Topologically, residues 1 to 124 (MANVSKKVSW…TAFRTVEIKR (124 aa)) are cytoplasmic. Ser9 is subject to Phosphoserine. Transmembrane regions (helical) follow at residues 125-157 (WVIC…YRVI) and 172-195 (FSLL…VAFI). Positions 201-205 (GSGIP) match the Selectivity filter part_1 motif. A chloride-binding site is contributed by Ser202. An intramembrane region (helical) is located at residues 204–211 (IPQIKCFL). Helical transmembrane passes span 221 to 239 (RLKT…VVGG) and 245 to 262 (EGPM…ISQG). The Selectivity filter part_2 signature appears at 243–247 (GKEGP). 2 intramembrane regions (helical) span residues 286 to 298 (FVSA…VSAA) and 302 to 310 (PVGGVLFSL). Transmembrane regions (helical) follow at residues 320-339 (FLTW…LNFV), 373-403 (IPVF…FRIR), 408-430 (PCLQ…FVLI), 485-505 (PMTL…TYGL), and 510-533 (GVFI…MSYL). Positions 510–514 (GVFIP) match the Selectivity filter part_3 motif. Position 512 (Phe512) interacts with chloride. An intramembrane region (helical) is located at residues 543–557 (GKYALMGAAAQLGGI). Residues 558–560 (VRM) constitute an intramembrane region (note=Loop between two helices). An intramembrane region (helical) is located at residues 561–572 (TLSLTVIMMEAT). An intramembrane region (note=Loop between two helices) is located at residues 573-576 (SNVT). The helical transmembrane segment at 577-595 (YGFPIMLVLMTAKIVGDVF) threads the bilayer. The Cytoplasmic portion of the chain corresponds to 596-803 (IEGLYDMHIQ…GLEELSLAQT (208 aa)). Tyr600 is a chloride binding site. 2 CBS domains span residues 629-693 (MSTP…VFVE) and 739-797 (MNPS…GLEE). ATP is bound by residues 656–658 (HNG) and 781–784 (TRKD). At Ser799 the chain carries Phosphoserine.

This sequence belongs to the chloride channel (TC 2.A.49) family. ClC-7/CLCN7 subfamily. Chloride channel 7 are heteromers of alpha (CLCN7) and beta (OSTM1) subunits. Brain, testis, muscle and kidney.

It is found in the lysosome membrane. It catalyses the reaction 2 chloride(in) + H(+)(out) = 2 chloride(out) + H(+)(in). Its function is as follows. Slowly voltage-gated channel mediating the exchange of chloride ions against protons. Functions as antiporter and contributes to the acidification of the lysosome lumen and may be involved in maintaining lysosomal pH. The CLC channel family contains both chloride channels and proton-coupled anion transporters that exchange chloride or another anion for protons. The presence of conserved gating glutamate residues is typical for family members that function as antiporters. In Rattus norvegicus (Rat), this protein is H(+)/Cl(-) exchange transporter 7 (Clcn7).